Reading from the N-terminus, the 24-residue chain is Humanin-like 10 (24 aa).

Belongs to the humanin family. As to expression, expressed in mature brain, thyroid gland and testis.

It localises to the secreted. It is found in the cytoplasm. Its function is as follows. Plays a role as a neuroprotective and antiapoptotic factor. This is Humanin-like 10 from Homo sapiens (Human).